The primary structure comprises 136 residues: Sec-independent protein translocase protein TatB (136 aa).

A helical membrane pass occupies residues 2-22 (FGSVGWGELLVLLIVGLVVLG). Residues 107–136 (VTEPAPTPIVNPELAKPAEPGPTRYDADAT) form a disordered region.

The protein belongs to the TatB family. In terms of assembly, the Tat system comprises two distinct complexes: a TatABC complex, containing multiple copies of TatA, TatB and TatC subunits, and a separate TatA complex, containing only TatA subunits. Substrates initially bind to the TatABC complex, which probably triggers association of the separate TatA complex to form the active translocon.

The protein resides in the cell membrane. Functionally, part of the twin-arginine translocation (Tat) system that transports large folded proteins containing a characteristic twin-arginine motif in their signal peptide across membranes. Together with TatC, TatB is part of a receptor directly interacting with Tat signal peptides. TatB may form an oligomeric binding site that transiently accommodates folded Tat precursor proteins before their translocation. This chain is Sec-independent protein translocase protein TatB, found in Mycobacteroides abscessus (strain ATCC 19977 / DSM 44196 / CCUG 20993 / CIP 104536 / JCM 13569 / NCTC 13031 / TMC 1543 / L948) (Mycobacterium abscessus).